The chain runs to 371 residues: 3-dehydroquinate synthase (371 aa).

NAD(+) contacts are provided by residues 70–75 (DAEDGK), 104–108 (GAVTD), 128–129 (TT), Lys141, and Lys150. Residues Glu183, His246, and His262 each coordinate Zn(2+).

It belongs to the sugar phosphate cyclases superfamily. Dehydroquinate synthase family. Co(2+) serves as cofactor. It depends on Zn(2+) as a cofactor. The cofactor is NAD(+).

Its subcellular location is the cytoplasm. It carries out the reaction 7-phospho-2-dehydro-3-deoxy-D-arabino-heptonate = 3-dehydroquinate + phosphate. It functions in the pathway metabolic intermediate biosynthesis; chorismate biosynthesis; chorismate from D-erythrose 4-phosphate and phosphoenolpyruvate: step 2/7. Functionally, catalyzes the conversion of 3-deoxy-D-arabino-heptulosonate 7-phosphate (DAHP) to dehydroquinate (DHQ). The sequence is that of 3-dehydroquinate synthase from Saccharopolyspora erythraea (strain ATCC 11635 / DSM 40517 / JCM 4748 / NBRC 13426 / NCIMB 8594 / NRRL 2338).